A 203-amino-acid polypeptide reads, in one-letter code: Small ribosomal subunit protein uS4 (203 aa).

The S4 RNA-binding domain maps to 93 to 154 (RRLDNVVYRC…KSRNLDAVAD (62 aa)).

The protein belongs to the universal ribosomal protein uS4 family. In terms of assembly, part of the 30S ribosomal subunit. Contacts protein S5. The interaction surface between S4 and S5 is involved in control of translational fidelity.

Functionally, one of the primary rRNA binding proteins, it binds directly to 16S rRNA where it nucleates assembly of the body of the 30S subunit. With S5 and S12 plays an important role in translational accuracy. The chain is Small ribosomal subunit protein uS4 from Chlorobaculum tepidum (strain ATCC 49652 / DSM 12025 / NBRC 103806 / TLS) (Chlorobium tepidum).